Here is a 380-residue protein sequence, read N- to C-terminus: Carbonic anhydrase 2 (380 aa).

The signal sequence occupies residues 1–20; the sequence is MARTGALLLAALALAGCAQA. The Alpha-carbonic anhydrase domain occupies 38–322; the sequence is DHWDHSLNGE…HHHRRLLHNH (285 aa). Intrachain disulfides connect Cys-61/Cys-264, Cys-194/Cys-198, and Cys-296/Cys-354. The N-linked (GlcNAc...) asparagine glycan is linked to Asn-101. His-112 serves as the catalytic Proton acceptor. N-linked (GlcNAc...) asparagine glycosylation occurs at Asn-135. Zn(2+) contacts are provided by His-163, His-165, and His-182. Residue 260-261 participates in substrate binding; the sequence is TT. An N-linked (GlcNAc...) asparagine glycan is attached at Asn-297.

The protein belongs to the alpha-carbonic anhydrase family. Tetramer of two large and two small subunits linked by two disulfide bonds. It depends on Zn(2+) as a cofactor.

It is found in the periplasm. The enzyme catalyses hydrogencarbonate + H(+) = CO2 + H2O. Reversible hydration of carbon dioxide. The chain is Carbonic anhydrase 2 (CAH2) from Chlamydomonas reinhardtii (Chlamydomonas smithii).